The primary structure comprises 262 residues: Phosphonates import ATP-binding protein PhnC (262 aa).

In terms of domain architecture, ABC transporter spans 5 to 253; that stretch reads ICVEQLSKTF…RFDHLYRSIN (249 aa). ATP is bound at residue 37–44; the sequence is GPSGSGKS.

This sequence belongs to the ABC transporter superfamily. Phosphonates importer (TC 3.A.1.9.1) family. The complex is composed of two ATP-binding proteins (PhnC), two transmembrane proteins (PhnE) and a solute-binding protein (PhnD).

It is found in the cell inner membrane. The catalysed reaction is phosphonate(out) + ATP + H2O = phosphonate(in) + ADP + phosphate + H(+). Part of the ABC transporter complex PhnCDE involved in phosphonates import. Responsible for energy coupling to the transport system. The protein is Phosphonates import ATP-binding protein PhnC of Escherichia coli O157:H7.